The chain runs to 102 residues: Putative pterin-4-alpha-carbinolamine dehydratase (102 aa).

The protein belongs to the pterin-4-alpha-carbinolamine dehydratase family.

It catalyses the reaction (4aS,6R)-4a-hydroxy-L-erythro-5,6,7,8-tetrahydrobiopterin = (6R)-L-erythro-6,7-dihydrobiopterin + H2O. This is Putative pterin-4-alpha-carbinolamine dehydratase from Burkholderia multivorans (strain ATCC 17616 / 249).